The sequence spans 264 residues: MKFAIQSRRDAQSNELMELAKTYLQDFGLTYDEEAPEIVVSIGGDGTLLHAFHRYSHLLDQVAFVGIHTGHLGFYADWKPSELEKLVLSIAKKDFNVVEYPLLEVKVEHHNAASNTYLALNEATVKSPDVTLVMDVELNGNQFERNRGDGHSVSTPSGSTAYNKALGGAIIHPTLAALQITEIASINNRVFRTVGSPLILPAHHHCVLRPVNEQNFNMTVDHLQITQGDVKAIVFNVANERVRFARFRPFPFWERVHESFVANE.

Asp45 (proton acceptor) is an active-site residue. NAD(+) is bound by residues Asp45–Gly46, His50, Asn121–Glu122, Arg147, Asp149, Ala184, and Gln224.

Belongs to the NAD kinase family. The cofactor is a divalent metal cation.

It localises to the cytoplasm. It carries out the reaction NAD(+) + ATP = ADP + NADP(+) + H(+). In terms of biological role, involved in the regulation of the intracellular balance of NAD and NADP, and is a key enzyme in the biosynthesis of NADP. Catalyzes specifically the phosphorylation on 2'-hydroxyl of the adenosine moiety of NAD to yield NADP. The chain is NAD kinase from Lysinibacillus sphaericus (strain C3-41).